The sequence spans 429 residues: Adenylosuccinate synthetase (429 aa).

Residues Gly12–Lys18 and Gly40–Thr42 contribute to the GTP site. Catalysis depends on Asp13, which acts as the Proton acceptor. Residues Asp13 and Gly40 each contribute to the Mg(2+) site. Residues Asp13–Lys16, Asn38–His41, Thr128, Arg142, Gln223, Thr238, and Arg302 contribute to the IMP site. The active-site Proton donor is the His41. Val298–Arg304 serves as a coordination point for substrate. Residues Arg304, Lys330–Asp332, and Gly412–Gly414 contribute to the GTP site.

The protein belongs to the adenylosuccinate synthetase family. Homodimer. The cofactor is Mg(2+).

The protein resides in the cytoplasm. It carries out the reaction IMP + L-aspartate + GTP = N(6)-(1,2-dicarboxyethyl)-AMP + GDP + phosphate + 2 H(+). The protein operates within purine metabolism; AMP biosynthesis via de novo pathway; AMP from IMP: step 1/2. In terms of biological role, plays an important role in the de novo pathway of purine nucleotide biosynthesis. Catalyzes the first committed step in the biosynthesis of AMP from IMP. This chain is Adenylosuccinate synthetase, found in Corynebacterium diphtheriae (strain ATCC 700971 / NCTC 13129 / Biotype gravis).